The following is a 1437-amino-acid chain: CRISPR-associated endoribonuclease Cas13a (1437 aa).

2 HEPN-like fold regions span residues 460 to 626 (LNAS…AMFE) and 1101 to 1437 (EFRD…QLKN). Positions 1377–1419 (EVKEKKKPSDNNTGKGYSKRDRQQDRKEYDKYKEKKKKEGNFL) are disordered. The segment covering 1394–1416 (SKRDRQQDRKEYDKYKEKKKKEG) has biased composition (basic and acidic residues).

It belongs to the CRISPR-associated endoribonuclease Cas13a family. It depends on a divalent metal cation as a cofactor.

Target RNA acts as an activator for non-specific ssRNA degradation. CRISPR (clustered regularly interspaced short palindromic repeat), is an adaptive immune system that provides protection against mobile genetic elements (viruses, transposable elements and conjugative plasmids). CRISPR clusters contain sequences complementary to antecedent mobile elements and target invading nucleic acids. Unlike many single-component effectors, this CRISPR-Cas system targets RNA. CRISPR clusters are transcribed from pre-CRISPR RNA (crRNA) and processed into crRNA by this protein. Cleaves linear target ssRNA in a pre-crRNA-dependent fashion, preferentially around A residues. Binding a viable target RNA target activates this protein for non-specific RNA degradation in vitro (called collateral RNA degradation), but it is not very sensitive as it requires nanomolar levels of viable target RNA. This is CRISPR-associated endoribonuclease Cas13a from Lachnospiraceae bacterium (strain NK4A179).